A 344-amino-acid polypeptide reads, in one-letter code: Fibronectin type 3 and ankyrin repeat domains 1 protein (344 aa).

The Fibronectin type-III domain maps to 11–108 (KPHPPVVGKV…VVSVATTREP (98 aa)). ANK repeat units follow at residues 109-139 (ISSE…MIDV), 143-172 (FGFT…DVNL), 176-205 (SGKD…SWEA), 209-238 (GGCT…EVDV), 243-273 (SGWT…DVNI), and 277-306 (DGKT…DATV).

In terms of assembly, interacts with COPS5; regulates the phosphorylation of JUN and the transcriptional activity of AP-1. Interacts with RYBP; may prevent the ubiquitin-mediated proteasomal degradation of FANK1. In terms of processing, polyubiquitinated. Polyubiquitination leads to proteasomal degradation. Mostly restricted to testis (at protein level), including mid to late pachytene spermatocytes (stages VI-X), diplotene spermatocytes (stage XI), meiotically dividing spermatocytes (stage XII) and spermatids in steps 1-14. Highest levels in late pachytene spermatocytes and spermatids in steps 1-9.

It is found in the nucleus. Its subcellular location is the cytoplasm. The protein localises to the cytosol. It localises to the cytoskeleton. The protein resides in the cilium basal body. It is found in the cell projection. Its subcellular location is the cilium. Its function is as follows. Through the activation of JUN and AP-1-mediated transcription, may regulate apoptosis. This chain is Fibronectin type 3 and ankyrin repeat domains 1 protein, found in Mus musculus (Mouse).